The chain runs to 856 residues: MNESKSVASNELTSGKVERTTLKLSDKLKISSNIQQGNKFSLNKSITTVEVRKSKKRKNIDEAARSSLLLQNNDIDGNSEDKNSLTIQEQISRMNALQNASNNEKREELSSDSNKHIEEEVISVKAEVEQSVDVVLPNDNLLIESDSSEKVIVDPVTDSEHGDKDFQDVVMLDEFVSSNLDDAGDQKNGDQSDDISDLLEHKGIEGKKLKKYEKEHEEKKGNPKKVMSNNTYTKHVKLVIEEELEEDNNKQVIKNYRSKKNRVTNRSVKNKITRKVLIPNKITVQELANSMSERVKDVQQVLYQMTGKHDIKLTDYLDSDQASIIVEAFNHTFKLVDNAKLENDLYSDGNNMELIPRAPVVTVMGHVDHGKTSLLDAIRESNVVDGEFKGITQHIGAYQITLNGDKKITFIDTPGHEAFAAMRAHGTNVTDIVVLVVAADDGIMPQTIESINHVKAANVAMIVAVNKIDKHDADLDRITNALLQHGVVAESLGGDVIVVPVSAKEKINLDQLKSSILLIADLLELKAVYNTRASGTVIESKVDKNCGVVATLIVQKGTLKVGDIIVAGNQAYGRVRSMFNADGGSEKVAIPSMPIKVFGLNNVPNFGTSFIVVDSEKQARELINYRQDLLNVELSKQPAVDKSNILLYDMVDELNVILKCDVMGSIEAICYSIGKITHKDIRVNILYKGVGNITKSDVLLAETSNSIILAFNVKTDTQVKELAKQKNIEIKHYFVIYDIIDDIKKILTGMLKPLKQEVQIGTLSVRKVFSVGNNGSVLGCYVTSGLVKKGALVKLVRNNNIIHEGKIKVLRRFKDDVKEVTAGFECGILLDYSKEIYPESDVMNIFEIVEEIRVIQ.

Residues 356 to 526 form the tr-type G domain; the sequence is PRAPVVTVMG…LLIADLLELK (171 aa). The tract at residues 365–372 is G1; it reads GHVDHGKT. GTP is bound at residue 365–372; sequence GHVDHGKT. The interval 390 to 394 is G2; that stretch reads GITQH. A G3 region spans residues 412–415; it reads DTPG. GTP is bound by residues 412–416 and 466–469; these read DTPGH and NKID. The segment at 466–469 is G4; the sequence is NKID. The interval 502–504 is G5; that stretch reads SAK.

The protein belongs to the TRAFAC class translation factor GTPase superfamily. Classic translation factor GTPase family. IF-2 subfamily.

Its subcellular location is the cytoplasm. Its function is as follows. One of the essential components for the initiation of protein synthesis. Protects formylmethionyl-tRNA from spontaneous hydrolysis and promotes its binding to the 30S ribosomal subunits. Also involved in the hydrolysis of GTP during the formation of the 70S ribosomal complex. The polypeptide is Translation initiation factor IF-2 (Ehrlichia ruminantium (strain Welgevonden)).